Consider the following 238-residue polypeptide: Histone H1 (238 aa).

Composition is skewed to low complexity over residues 21-34 (AAVD…AKAP) and 123-132 (AKAPAAVKPK). Disordered regions lie at residues 21–57 (AAVD…AHPS) and 123–238 (AKAP…KAKK). In terms of domain architecture, H15 spans 54 to 124 (AHPSYAEMVS…KVKGSYKLAK (71 aa)). A compositionally biased stretch (basic residues) spans 133 to 197 (TATKKKPAAK…AAKPKAKAAA (65 aa)). 2 stretches are compositionally biased toward low complexity: residues 198–208 (KKAPAAATPKK) and 217–230 (KRAT…PAKK).

It belongs to the histone H1/H5 family.

It is found in the nucleus. It localises to the chromosome. Its function is as follows. Histones H1 are necessary for the condensation of nucleosome chains into higher-order structures. The chain is Histone H1 from Triticum aestivum (Wheat).